An 83-amino-acid polypeptide reads, in one-letter code: Exodeoxyribonuclease 7 small subunit (83 aa).

This sequence belongs to the XseB family. As to quaternary structure, heterooligomer composed of large and small subunits.

The protein localises to the cytoplasm. The enzyme catalyses Exonucleolytic cleavage in either 5'- to 3'- or 3'- to 5'-direction to yield nucleoside 5'-phosphates.. In terms of biological role, bidirectionally degrades single-stranded DNA into large acid-insoluble oligonucleotides, which are then degraded further into small acid-soluble oligonucleotides. This Aeromonas salmonicida (strain A449) protein is Exodeoxyribonuclease 7 small subunit.